The chain runs to 448 residues: Exodeoxyribonuclease 7 large subunit (448 aa).

Belongs to the XseA family. As to quaternary structure, heterooligomer composed of large and small subunits.

The protein localises to the cytoplasm. It catalyses the reaction Exonucleolytic cleavage in either 5'- to 3'- or 3'- to 5'-direction to yield nucleoside 5'-phosphates.. Its function is as follows. Bidirectionally degrades single-stranded DNA into large acid-insoluble oligonucleotides, which are then degraded further into small acid-soluble oligonucleotides. The protein is Exodeoxyribonuclease 7 large subunit of Shewanella sp. (strain MR-4).